A 270-amino-acid chain; its full sequence is MAPWGKRLAGVRGVLLDISGVLYDSGAGGGTAIAGSVEAVARLKRSRLKVRFCTNESQKSRAELVGQLQRLGFDISEQEVTAPAPAACQILKEQGLRPYLLIHDGVRSEFDQIDTSNPNCVVIADAGESFSYQNMNNAFQVLMELEKPVLISLGKGRYYKETSGLMLDVGPYMKALEYACGIKAEVVGKPSPEFFKSALQAIGVEAHQAVMIGDDIVGDVGGAQRCGMRALQVRTGKFRPSDEHHPEVKADGYVDNLAEAVDLLLQHADK.

The Mg(2+) site is built by D17 and S19. Substrate-binding positions include 17–19, 54–55, and K189; these read DIS and TN. Residue D214 participates in Mg(2+) binding.

This sequence belongs to the HAD-like hydrolase superfamily. In terms of assembly, homodimer. Mg(2+) serves as cofactor. As to expression, expressed in brain, and at lower levels in liver and kidney. Detected in thyroid (at protein level). Expressed in liver, kidney and moderately in brain.

It is found in the cytoplasm. The protein resides in the nucleus. The catalysed reaction is diphosphate + H2O = 2 phosphate + H(+). Its function is as follows. Phosphatase that hydrolyzes imidodiphosphate, 3-phosphohistidine and 6-phospholysine. Has broad substrate specificity and can also hydrolyze inorganic diphosphate, but with lower efficiency. The chain is Phospholysine phosphohistidine inorganic pyrophosphate phosphatase (LHPP) from Homo sapiens (Human).